The following is a 201-amino-acid chain: Regulator of G-protein signaling 16 (201 aa).

Residues C2 and C12 are each lipidated (S-palmitoyl cysteine). Positions S64 to A180 constitute an RGS domain. At Y167 the chain carries Phosphotyrosine; by EGFR. Residue Y176 is modified to Phosphotyrosine. The disordered stretch occupies residues A181–T201.

In terms of assembly, interacts with GNAI1 and GNAQ. Interacts with GNAI3, GNAI3 and GNAO1. Palmitoylated on Cys-2 and/or Cys-12. In terms of processing, phosphorylated. Phosphorylation at Tyr-167 by EGFR enhances GTPase accelerating (GAP) activity toward GNAI1. Retinal; also predominantly expressed in the liver and pituitary.

The protein localises to the membrane. In terms of biological role, regulates G protein-coupled receptor signaling cascades. Inhibits signal transduction by increasing the GTPase activity of G protein alpha subunits, thereby driving them into their inactive GDP-bound form. Plays an important role in the phototransduction cascade by regulating the lifetime and effective concentration of activated transducin alpha. May regulate extra and intracellular mitogenic signals. This Mus musculus (Mouse) protein is Regulator of G-protein signaling 16 (Rgs16).